A 93-amino-acid polypeptide reads, in one-letter code: Insertion element ISR1 uncharacterized 11 kDa protein A1 (93 aa).

Disordered regions lie at residues 14–33 (RRAR…QERR) and 68–93 (RRRA…SAGR).

The polypeptide is Insertion element ISR1 uncharacterized 11 kDa protein A1 (Rhizobium sp).